Consider the following 90-residue polypeptide: Probable Fe(2+)-trafficking protein (90 aa).

This sequence belongs to the Fe(2+)-trafficking protein family.

Could be a mediator in iron transactions between iron acquisition and iron-requiring processes, such as synthesis and/or repair of Fe-S clusters in biosynthetic enzymes. This Aliivibrio salmonicida (strain LFI1238) (Vibrio salmonicida (strain LFI1238)) protein is Probable Fe(2+)-trafficking protein.